The following is a 281-amino-acid chain: HTH-type transcriptional activator RamA (281 aa).

Positions 213–278 constitute an HTH luxR-type domain; the sequence is RIKQTTKLSA…EAVNAARRIG (66 aa).

Its function is as follows. RamA is a master regulator of acetate metabolism. It positively controls the expression of acnA, aceA, aceB, ack, pta and ramB genes in the presence of acetate. RamA is also a positive regulator of rpf2 gene expression during growth on glucose as the sole carbon source. The sequence is that of HTH-type transcriptional activator RamA from Corynebacterium glutamicum (strain ATCC 13032 / DSM 20300 / JCM 1318 / BCRC 11384 / CCUG 27702 / LMG 3730 / NBRC 12168 / NCIMB 10025 / NRRL B-2784 / 534).